Reading from the N-terminus, the 343-residue chain is Glycerol-3-phosphate dehydrogenase [NAD(P)+] (343 aa).

NADPH is bound by residues Ser11, Trp12, Arg32, and Lys106. Sn-glycerol 3-phosphate contacts are provided by Lys106, Gly137, and Ser139. Residue Ala141 coordinates NADPH. Positions 192, 245, 255, 256, and 257 each coordinate sn-glycerol 3-phosphate. Lys192 acts as the Proton acceptor in catalysis. NADPH is bound at residue Arg256. Positions 280 and 282 each coordinate NADPH.

Belongs to the NAD-dependent glycerol-3-phosphate dehydrogenase family.

The protein localises to the cytoplasm. It carries out the reaction sn-glycerol 3-phosphate + NAD(+) = dihydroxyacetone phosphate + NADH + H(+). It catalyses the reaction sn-glycerol 3-phosphate + NADP(+) = dihydroxyacetone phosphate + NADPH + H(+). Its pathway is membrane lipid metabolism; glycerophospholipid metabolism. Catalyzes the reduction of the glycolytic intermediate dihydroxyacetone phosphate (DHAP) to sn-glycerol 3-phosphate (G3P), the key precursor for phospholipid synthesis. The protein is Glycerol-3-phosphate dehydrogenase [NAD(P)+] of Syntrophomonas wolfei subsp. wolfei (strain DSM 2245B / Goettingen).